We begin with the raw amino-acid sequence, 106 residues long: Large ribosomal subunit protein uL24 (106 aa).

Residues 69 to 106 form a disordered region; sequence SNLNPVDPKTGKATRVGRKVSSEGTLVRYSKKSGEEIK.

It belongs to the universal ribosomal protein uL24 family. As to quaternary structure, part of the 50S ribosomal subunit.

One of two assembly initiator proteins, it binds directly to the 5'-end of the 23S rRNA, where it nucleates assembly of the 50S subunit. Its function is as follows. One of the proteins that surrounds the polypeptide exit tunnel on the outside of the subunit. The sequence is that of Large ribosomal subunit protein uL24 from Bacteroides fragilis (strain ATCC 25285 / DSM 2151 / CCUG 4856 / JCM 11019 / LMG 10263 / NCTC 9343 / Onslow / VPI 2553 / EN-2).